The sequence spans 70 residues: Large ribosomal subunit protein bL31 (70 aa).

This sequence belongs to the bacterial ribosomal protein bL31 family. Type A subfamily. Part of the 50S ribosomal subunit.

In terms of biological role, binds the 23S rRNA. The polypeptide is Large ribosomal subunit protein bL31 (Chlorobium chlorochromatii (strain CaD3)).